A 396-amino-acid chain; its full sequence is Digeranylgeranylglycerophospholipid reductase (396 aa).

FAD is bound by residues glycine 14, glutamate 33, cysteine 44, glycine 45, glycine 47, arginine 100, alanine 124, glutamate 162, aspartate 283, glycine 295, and isoleucine 296. Lysine 338 and valine 374 together coordinate a 2,3-bis-O-(geranylgeranyl)-sn-glycerol 1-phospholipid.

It belongs to the geranylgeranyl reductase family. DGGGPL reductase subfamily. FAD is required as a cofactor.

It carries out the reaction 2,3-bis-O-(phytanyl)-sn-glycerol 1-phosphate + 8 NADP(+) = 2,3-bis-O-(geranylgeranyl)-sn-glycerol 1-phosphate + 8 NADPH + 8 H(+). It catalyses the reaction 2,3-bis-O-(phytanyl)-sn-glycerol 1-phosphate + 8 NAD(+) = 2,3-bis-O-(geranylgeranyl)-sn-glycerol 1-phosphate + 8 NADH + 8 H(+). The enzyme catalyses a 2,3-bis-O-phytanyl-sn-glycerol 1-phospholipid + 8 A = a 2,3-bis-O-(geranylgeranyl)-sn-glycerol 1-phospholipid + 8 AH2. The catalysed reaction is CDP-2,3-bis-O-(geranylgeranyl)-sn-glycerol + 8 AH2 = CDP-2,3-bis-O-(phytanyl)-sn-glycerol + 8 A. It carries out the reaction archaetidylserine + 8 AH2 = 2,3-bis-O-phytanyl-sn-glycero-3-phospho-L-serine + 8 A. It functions in the pathway membrane lipid metabolism; glycerophospholipid metabolism. Functionally, is involved in the reduction of 2,3-digeranylgeranylglycerophospholipids (unsaturated archaeols) into 2,3-diphytanylglycerophospholipids (saturated archaeols) in the biosynthesis of archaeal membrane lipids. Catalyzes the formation of archaetidic acid (2,3-di-O-phytanyl-sn-glyceryl phosphate) from 2,3-di-O-geranylgeranylglyceryl phosphate (DGGGP) via the hydrogenation of each double bond of the isoprenoid chains. Is also probably able to reduce double bonds of geranyl groups in CDP-2,3-bis-O-(geranylgeranyl)-sn-glycerol and archaetidylserine, thus acting at various stages in the biosynthesis of archaeal membrane lipids. In Thermoplasma volcanium (strain ATCC 51530 / DSM 4299 / JCM 9571 / NBRC 15438 / GSS1), this protein is Digeranylgeranylglycerophospholipid reductase.